Here is a 433-residue protein sequence, read N- to C-terminus: LanC-like protein GCL1 (433 aa).

The tract at residues Met1–Gly22 is disordered.

The protein belongs to the LanC-like protein family.

Functionally, may play a role in signaling. May be not involved in abscisic acid (ABA) signaling. The chain is LanC-like protein GCL1 (GCL1) from Arabidopsis thaliana (Mouse-ear cress).